Consider the following 345-residue polypeptide: Dihydroorotase (345 aa).

The Zn(2+) site is built by His13 and His15. Substrate contacts are provided by residues 15–17 (HLR) and Asn41. Residues Lys99, His136, His174, and Asp247 each coordinate Zn(2+). An N6-carboxylysine modification is found at Lys99. His136 serves as a coordination point for substrate. Residue Asp247 is part of the active site. His251 and Ala263 together coordinate substrate.

Belongs to the metallo-dependent hydrolases superfamily. DHOase family. Class II DHOase subfamily. In terms of assembly, homodimer. Zn(2+) is required as a cofactor.

The enzyme catalyses (S)-dihydroorotate + H2O = N-carbamoyl-L-aspartate + H(+). It participates in pyrimidine metabolism; UMP biosynthesis via de novo pathway; (S)-dihydroorotate from bicarbonate: step 3/3. Functionally, catalyzes the reversible cyclization of carbamoyl aspartate to dihydroorotate. The polypeptide is Dihydroorotase (Halorhodospira halophila (strain DSM 244 / SL1) (Ectothiorhodospira halophila (strain DSM 244 / SL1))).